The following is a 534-amino-acid chain: UDP-glucuronosyltransferase 1A5 (534 aa).

A signal peptide spans 1–28 (MATGLQVPLPQLATGLLLLLSVQPWAES). N119, N296, and N348 each carry an N-linked (GlcNAc...) asparagine glycan. Residues 492–508 (VIGFLLAVVLTVAFITF) traverse the membrane as a helical segment.

It belongs to the UDP-glycosyltransferase family. As to quaternary structure, homodimer. Homooligomer. Interacts with UGT1A1, UGT1A3, UGT1A4, UGT1A6, UGT1A7, UGT1A8, UGT1A9 and UGT1A10 to form heterodimers. Isoform 1 interacts with isoform 2/i2 suggesting that oligomerization is involved in negative regulation of transferase activity by isoform 2. Isoform 1 also interacts with respective i2 isoforms of UGT1A1, UGT1A3, UGT1A4, UGT1A6, UGT1A7, UGT1A8, UGT1A9 and UGT1A10. Isoform 1 and isoform 2 are expressed in colon and small intestine. Neither isoform is expressed in liver, kidney or esophagus.

It localises to the endoplasmic reticulum membrane. The enzyme catalyses glucuronate acceptor + UDP-alpha-D-glucuronate = acceptor beta-D-glucuronoside + UDP + H(+). The catalysed reaction is zolasartan + UDP-alpha-D-glucuronate = zolarsartan-1-N-beta-D-glucuronide + UDP. In terms of biological role, UDP-glucuronosyltransferase (UGT) that catalyzes phase II biotransformation reactions in which lipophilic substrates are conjugated with glucuronic acid to increase the metabolite's water solubility, thereby facilitating excretion into either the urine or bile. Essential for the elimination and detoxification of drugs, xenobiotics and endogenous compounds. Involved in the glucuronidation of the AGTR1 angiotensin receptor antagonist zolarsatan, a drug which can inhibit the effect of angiotensin II. Lacks UGT glucuronidation activity but acts as a negative regulator of isoform 1. The polypeptide is UDP-glucuronosyltransferase 1A5 (Homo sapiens (Human)).